Here is a 346-residue protein sequence, read N- to C-terminus: Phosphoribosylformylglycinamidine cyclo-ligase (346 aa).

The protein belongs to the AIR synthase family.

Its subcellular location is the cytoplasm. It carries out the reaction 2-formamido-N(1)-(5-O-phospho-beta-D-ribosyl)acetamidine + ATP = 5-amino-1-(5-phospho-beta-D-ribosyl)imidazole + ADP + phosphate + H(+). Its pathway is purine metabolism; IMP biosynthesis via de novo pathway; 5-amino-1-(5-phospho-D-ribosyl)imidazole from N(2)-formyl-N(1)-(5-phospho-D-ribosyl)glycinamide: step 2/2. The protein is Phosphoribosylformylglycinamidine cyclo-ligase of Shewanella piezotolerans (strain WP3 / JCM 13877).